We begin with the raw amino-acid sequence, 594 residues long: Capsid vertex component 1 (594 aa).

4 disordered regions span residues 52 to 77 (GRSTGRAPGGDEDDAPASDDAEDAVG), 176 to 205 (NKRDRQHQLATTTNHRRRGGLRNNLDNGSD), 443 to 468 (ARRQRERSAPKPQELLFGPRNESGPP), and 575 to 594 (GRQEPETPRVSGRRLPFDDL). Positions 61–76 (GDEDDAPASDDAEDAV) are enriched in acidic residues.

The protein belongs to the herpesviridae CVC1 protein family. As to quaternary structure, interacts (via C-terminus) with capsid vertex component 2/CVC2.

The protein localises to the virion. The protein resides in the host nucleus. Functionally, capsid vertex-specific component that plays a role during viral DNA encapsidation, assuring correct genome cleavage and presumably stabilizing capsids that contain full-length viral genomes. In Homo sapiens (Human), this protein is Capsid vertex component 1.